The following is a 315-amino-acid chain: Methionyl-tRNA formyltransferase (315 aa).

113–116 (SLLP) contributes to the (6S)-5,6,7,8-tetrahydrofolate binding site.

Belongs to the Fmt family.

The enzyme catalyses L-methionyl-tRNA(fMet) + (6R)-10-formyltetrahydrofolate = N-formyl-L-methionyl-tRNA(fMet) + (6S)-5,6,7,8-tetrahydrofolate + H(+). Its function is as follows. Attaches a formyl group to the free amino group of methionyl-tRNA(fMet). The formyl group appears to play a dual role in the initiator identity of N-formylmethionyl-tRNA by promoting its recognition by IF2 and preventing the misappropriation of this tRNA by the elongation apparatus. This Salmonella gallinarum (strain 287/91 / NCTC 13346) protein is Methionyl-tRNA formyltransferase.